We begin with the raw amino-acid sequence, 310 residues long: Olfactory receptor 2A25 (310 aa).

Residues 1-24 lie on the Extracellular side of the membrane; it reads MGGNQTSITEFLLLGFPIGPRIQM. The N-linked (GlcNAc...) asparagine glycan is linked to N4. The helical transmembrane segment at 25–48 threads the bilayer; sequence LLFGLFSLFYIFILLGNGTILGLI. Residues 49-56 lie on the Cytoplasmic side of the membrane; that stretch reads SLDSRLHT. The chain crosses the membrane as a helical span at residues 57 to 78; the sequence is PMYFFLSHLAVVDIACACSTVP. Residues 79 to 99 are Extracellular-facing; the sequence is QMLVNLLHPAKPISFAGCMTQ. An intrachain disulfide couples C96 to C188. A helical transmembrane segment spans residues 100–119; that stretch reads MFLFLSFAHTECLLLVVMSY. The Cytoplasmic portion of the chain corresponds to 120-138; it reads DRYVAICHPLRYSTIMTWK. A helical membrane pass occupies residues 139 to 157; the sequence is VCITLALTSWILGVLLALV. At 158 to 195 the chain is on the extracellular side; sequence HLVLLLPLSFCGPQKLNHFFCEIMAVLKLACADTHINE. A helical transmembrane segment spans residues 196-218; that stretch reads VMVLAGAVSVLVGAFFSTVISYV. Over 219–235 the chain is Cytoplasmic; the sequence is HILCAILKIQSGEGCQK. A helical transmembrane segment spans residues 236–258; it reads AFSICSSHLCVVGLFYGTAIIMY. The Extracellular segment spans residues 259-271; that stretch reads VEPQYESPKEQKK. Residues 272–291 traverse the membrane as a helical segment; sequence YLLLFHSLFNPMLNPLIYSL. Topologically, residues 292–310 are cytoplasmic; it reads RNKEVQGTLKRMLEKKRTS.

The protein belongs to the G-protein coupled receptor 1 family.

The protein localises to the cell membrane. Functionally, odorant receptor. This chain is Olfactory receptor 2A25 (OR2A25), found in Homo sapiens (Human).